The following is a 497-amino-acid chain: Glutamyl-tRNA reductase (497 aa).

Substrate contacts are provided by residues 58–61, serine 118, 123–125, and glutamine 129; these read TCNR and EQQ. Cysteine 59 functions as the Nucleophile in the catalytic mechanism. 214-219 is a binding site for NADP(+); sequence GAGAMA. The span at 461–477 shows a compositional bias: polar residues; it reads VTQPGQADSSAAQTAGT. Positions 461-486 are disordered; it reads VTQPGQADSSAAQTAGTSARADQIPS.

This sequence belongs to the glutamyl-tRNA reductase family. As to quaternary structure, homodimer.

It carries out the reaction (S)-4-amino-5-oxopentanoate + tRNA(Glu) + NADP(+) = L-glutamyl-tRNA(Glu) + NADPH + H(+). It participates in porphyrin-containing compound metabolism; protoporphyrin-IX biosynthesis; 5-aminolevulinate from L-glutamyl-tRNA(Glu): step 1/2. In terms of biological role, catalyzes the NADPH-dependent reduction of glutamyl-tRNA(Glu) to glutamate 1-semialdehyde (GSA). In Corynebacterium jeikeium (strain K411), this protein is Glutamyl-tRNA reductase.